A 442-amino-acid chain; its full sequence is Proline--tRNA ligase (442 aa).

It belongs to the class-II aminoacyl-tRNA synthetase family. ProS type 2 subfamily. As to quaternary structure, homodimer.

It localises to the cytoplasm. It carries out the reaction tRNA(Pro) + L-proline + ATP = L-prolyl-tRNA(Pro) + AMP + diphosphate. Catalyzes the attachment of proline to tRNA(Pro) in a two-step reaction: proline is first activated by ATP to form Pro-AMP and then transferred to the acceptor end of tRNA(Pro). This chain is Proline--tRNA ligase, found in Brucella suis (strain ATCC 23445 / NCTC 10510).